The chain runs to 283 residues: F-box only protein 27 (283 aa).

Residues 1–23 form a disordered region; that stretch reads MGASVSRGRAARVPAPEPEPEEA. Residues 23–70 form the F-box domain; sequence ALDLSQLPPELLLVVLSHVPPRTLLGRCRQVCRGWRALVDGQALWLLI. In terms of domain architecture, FBA spans 104 to 280; that stretch reads FCARRPIGRN…VTNSSVIVRV (177 aa).

Part of a SCF (SKP1-cullin-F-box) protein ligase complex. Interacts with SKP1 and CUL1. Predominantly expressed in brain, heart and kidney. Expressed at lower levels in liver and lung.

Its function is as follows. Substrate-recognition component of the SCF (SKP1-CUL1-F-box protein)-type E3 ubiquitin ligase complex. Able to recognize and bind denatured glycoproteins, which are modified with complex-type oligosaccharides. This is F-box only protein 27 (FBXO27) from Homo sapiens (Human).